Here is a 566-residue protein sequence, read N- to C-terminus: UvrABC system protein C (566 aa).

Residues 16–93 enclose the GIY-YIG domain; sequence EKPGVYLFKK…IQQYKPRYNV (78 aa). One can recognise a UVR domain in the interval 199–234; sequence AEVLPKLYEKIEEFSKELMFEKCAHIRDQIIALENL.

It belongs to the UvrC family. In terms of assembly, interacts with UvrB in an incision complex.

The protein resides in the cytoplasm. The UvrABC repair system catalyzes the recognition and processing of DNA lesions. UvrC both incises the 5' and 3' sides of the lesion. The N-terminal half is responsible for the 3' incision and the C-terminal half is responsible for the 5' incision. The chain is UvrABC system protein C from Aquifex aeolicus (strain VF5).